The chain runs to 547 residues: Malolactic enzyme (547 aa).

Catalysis depends on tyrosine 92, which acts as the Proton donor. Residue lysine 165 is the Proton acceptor of the active site. Residue lysine 165 participates in substrate binding. The Mn(2+) site is built by glutamate 236, aspartate 237, and aspartate 260. NAD(+) contacts are provided by residues alanine 293–alanine 296, asparagine 405, and asparagine 450. Asparagine 450 serves as a coordination point for substrate.

The protein belongs to the malic enzymes family. Homodimer. The cofactor is Mn(2+). Requires NAD(+) as cofactor.

It catalyses the reaction (S)-malate + H(+) = (S)-lactate + CO2. In terms of biological role, involved in the malolactic fermentation (MLF) of wine, which results in a natural decrease in acidity and favorable changes in wine flavors. Catalyzes the decarboxylation of L-malate to L-lactate. In Lactiplantibacillus plantarum (strain ATCC BAA-793 / NCIMB 8826 / WCFS1) (Lactobacillus plantarum), this protein is Malolactic enzyme.